Here is a 172-residue protein sequence, read N- to C-terminus: Co-chaperone protein HscB homolog (172 aa).

In terms of domain architecture, J spans 2 to 69 (NHFELFNLPV…DSRAAYLLAL (68 aa)).

This sequence belongs to the HscB family. In terms of assembly, interacts with HscA and stimulates its ATPase activity.

Co-chaperone involved in the maturation of iron-sulfur cluster-containing proteins. Seems to help targeting proteins to be folded toward HscA. The chain is Co-chaperone protein HscB homolog from Acinetobacter baumannii (strain SDF).